A 947-amino-acid polypeptide reads, in one-letter code: Receptor-like protein 56 (947 aa).

The N-terminal stretch at 1–27 is a signal peptide; the sequence is MEGKVFSGQKLILVMLLLGHLHGFSSC. Residues 28–899 lie on the Extracellular side of the membrane; it reads IEKERKALLE…EDDKEVAIDM (872 aa). N-linked (GlcNAc...) asparagine glycans are attached at residues Asn-60, Asn-75, and Asn-98. 9 LRR repeats span residues 105–128, 134–157, 159–182, 183–207, 209–232, 233–257, 259–281, 282–305, and 307–330; these read FEEV…VEGY, LRNL…FLNA, TSLT…ELKN, LTNL…EFPY, KKLK…GLKN, LTNL…VFCE, KNLQ…CFGN, LNKL…SFSS, and ESLE…PLTN. Residues Asn-141, Asn-148, and Asn-182 are each glycosylated (N-linked (GlcNAc...) asparagine). A glycan (N-linked (GlcNAc...) asparagine) is linked at Asn-232. Asn-330 carries an N-linked (GlcNAc...) asparagine glycan. Residues 332 to 356 form an LRR 10; degenerate repeat; the sequence is TKLKVFIFSSKDDMVQVKIESTWQP. LRR repeat units follow at residues 357-380, 381-404, 405-427, 428-450, 452-476, 477-500, 502-527, 529-549, 550-575, 577-598, 600-616, 617-640, 642-663, 664-686, 757-780, 781-804, 805-829, and 831-854; these read LFQL…LMYQ, KNLH…LLEN, NPEL…PTSV, HNLQ…NFGR, LPNL…MGEM, YNIS…FVSS, FSLS…NFTS, IVLR…LLTL, VDLC…VFEY, NFLD…SLDN, LFLH…DTFL, GSIQ…VDTQ, ISFL…LCEF, SKMR…CFNN, LNSM…ELGD, LFKL…SFSK, LQDI…LTNL, and SLAI…QFNT. Asn-415 is a glycosylation site (N-linked (GlcNAc...) asparagine). Residues Asn-459, Asn-478, Asn-488, and Asn-524 are each glycosylated (N-linked (GlcNAc...) asparagine). N-linked (GlcNAc...) asparagine glycosylation is present at Asn-606. Residue Asn-686 is glycosylated (N-linked (GlcNAc...) asparagine). 4 N-linked (GlcNAc...) asparagine glycosylation sites follow: Asn-788, Asn-828, Asn-836, and Asn-841. Residues 900–920 form a helical membrane-spanning segment; sequence LVFYWSTAGTYVTALIGILVL. The Cytoplasmic portion of the chain corresponds to 921–947; the sequence is MCVDCSWRRAWLRLVDAFIASAKSKLA.

This sequence belongs to the RLP family.

It localises to the cell membrane. The protein is Receptor-like protein 56 of Arabidopsis thaliana (Mouse-ear cress).